The sequence spans 132 residues: Acyl carrier protein 3, chloroplastic (132 aa).

Residues 1–49 (MASIAGSAVSFAKPVKAINTNSLSFSGARRGNAFLRLQPVPMRFAVCCS) constitute a chloroplast transit peptide. Positions 52–127 (QDTVEKVCEI…DAATLIDKLV (76 aa)) constitute a Carrier domain. At S87 the chain carries O-(pantetheine 4'-phosphoryl)serine.

Belongs to the acyl carrier protein (ACP) family. Post-translationally, 4'-phosphopantetheine is transferred from CoA to a specific serine of apo-ACP by acpS. This modification is essential for activity because fatty acids are bound in thioester linkage to the sulfhydryl of the prosthetic group.

The protein resides in the plastid. Its subcellular location is the chloroplast. It functions in the pathway lipid metabolism; fatty acid biosynthesis. In terms of biological role, carrier of the growing fatty acid chain in fatty acid biosynthesis. The protein is Acyl carrier protein 3, chloroplastic (ACL1.3) of Hordeum vulgare (Barley).